We begin with the raw amino-acid sequence, 1378 residues long: Hybrid signal transduction histidine kinase H (1378 aa).

The stretch at 212–242 (KEKFKKEELINDFKSRLETLENKIDQRVDER) forms a coiled coil. A PAS domain is found at 243-314 (IETRFKYVLE…NNNNNNNNNN (72 aa)). A disordered region spans residues 294-337 (YQQHNNNNNNNNNNNNNNNNNNNNNSNNKSPIINSPNTTSPTNT). Over residues 298–337 (NNNNNNNNNNNNNNNNNNNNNSNNKSPIINSPNTTSPTNT) the composition is skewed to low complexity. In terms of domain architecture, Histidine kinase spans 498–805 (TMSHEMRTPL…SFHFLVEVFF (308 aa)). Residue H501 is modified to Phosphohistidine; by autocatalysis. Over residues 663–696 (NNSNNSNNNHNHNNNNNNNNHLNCSGSFNNNGFN) the composition is skewed to low complexity. Disordered stretches follow at residues 663–717 (NNSN…DKHC), 905–924 (TNNNNSNNDNNNNNTTSTTT), and 1103–1213 (NNSN…HPNP). The segment covering 697-714 (HGHHHHHHHHHHHHHHHD) has biased composition (basic residues). Composition is skewed to low complexity over residues 1103–1119 (NNSNNNINNNNNNSGSS) and 1136–1187 (SPSL…NNNN). A compositionally biased stretch (polar residues) spans 1188 to 1206 (LNHYNSDSILSSDLSPQQH). Positions 1244–1364 (KIMVAEDSLV…ILAVELKRAW (121 aa)) constitute a Response regulatory domain. D1297 carries the post-translational modification 4-aspartylphosphate.

Post-translationally, activation probably requires transfer of a phosphate group between a histidine in the kinase core (transmitter) domain and an aspartate of the receiver domain.

The catalysed reaction is ATP + protein L-histidine = ADP + protein N-phospho-L-histidine.. Acts as a receptor histidine kinase for a signal transduction pathway. This protein undergoes an ATP-dependent autophosphorylation at a conserved histidine residue in the kinase core, and a phosphoryl group is then transferred to a conserved aspartate residue in the receiver domain. The polypeptide is Hybrid signal transduction histidine kinase H (dhkH) (Dictyostelium discoideum (Social amoeba)).